A 350-amino-acid chain; its full sequence is MKKIGIIGAGGIARAHATALSTIKNAELVGVYDINQQNAESFVKTFGGKSFENVDELIDASEGLIVASPNFCHKEHALQALGKHKHVLCEKPMAISLEEASIMKDTAERLSVRASMGFNYRYLSYVNILKSLIINNELGNILSIKVHFKKNSALRRKKFTWRDDANSKKTSGSLGDLGIHLIDMVWYLFESDFITESVRAKMNTNVKTKEDKQVLVDDYAEIYGQLKNKVFVNIITSKCSVPEDCGFSIEVVGHKKEFKYHTGNPHVYKLIDGLNVVDCPVPQSLLNDPPNEFYGWADSFRSELINWIASTQNDWVEIPSFSDGFRSQEVLEMFFEKDSNSQPMSVSAVN.

The protein belongs to the Gfo/Idh/MocA family.

It carries out the reaction D-glucose 6-phosphate + NAD(+) = 3-dehydro-D-glucose 6-phosphate + NADH + H(+). Its pathway is antibiotic biosynthesis; kanosamine biosynthesis. In terms of biological role, involved in the biosynthesis of kanosamine (3-amino-3-deoxy-D-glucose), which is known to have antibiotic and antifungal properties, and to be a precursor of the antibiotic neotrehalosadiamine (3,3'-diamino-3,3'-dideoxy-alpha,beta-trehalose (NTD)). Catalyzes the oxidation of glucose 6-phosphate to 3-oxo-D-glucose 6-phosphate. It can only use NAD. This Bacillus subtilis (strain 168) protein is Glucose-6-phosphate 3-dehydrogenase (ntdC).